A 244-amino-acid polypeptide reads, in one-letter code: Phosphoadenosine 5'-phosphosulfate reductase (244 aa).

The active-site Nucleophile; cysteine thiosulfonate intermediate is the cysteine 239.

It belongs to the PAPS reductase family. CysH subfamily.

Its subcellular location is the cytoplasm. The enzyme catalyses [thioredoxin]-disulfide + sulfite + adenosine 3',5'-bisphosphate + 2 H(+) = [thioredoxin]-dithiol + 3'-phosphoadenylyl sulfate. It functions in the pathway sulfur metabolism; hydrogen sulfide biosynthesis; sulfite from sulfate: step 3/3. Catalyzes the formation of sulfite from phosphoadenosine 5'-phosphosulfate (PAPS) using thioredoxin as an electron donor. This is Phosphoadenosine 5'-phosphosulfate reductase from Pectobacterium carotovorum subsp. carotovorum (strain PC1).